The chain runs to 695 residues: Elongation factor G (695 aa).

One can recognise a tr-type G domain in the interval 8–282 (EKTRNIGIMA…AVLDYLPAPT (275 aa)). GTP-binding positions include 17 to 24 (AHIDAGKT), 81 to 85 (DTPGH), and 135 to 138 (NKMD).

It belongs to the TRAFAC class translation factor GTPase superfamily. Classic translation factor GTPase family. EF-G/EF-2 subfamily.

The protein resides in the cytoplasm. Its function is as follows. Catalyzes the GTP-dependent ribosomal translocation step during translation elongation. During this step, the ribosome changes from the pre-translocational (PRE) to the post-translocational (POST) state as the newly formed A-site-bound peptidyl-tRNA and P-site-bound deacylated tRNA move to the P and E sites, respectively. Catalyzes the coordinated movement of the two tRNA molecules, the mRNA and conformational changes in the ribosome. This chain is Elongation factor G, found in Listeria welshimeri serovar 6b (strain ATCC 35897 / DSM 20650 / CCUG 15529 / CIP 8149 / NCTC 11857 / SLCC 5334 / V8).